The sequence spans 450 residues: Phosphoglucosamine mutase (450 aa).

Residue Ser97 is the Phosphoserine intermediate of the active site. Residues Ser97, Asp236, Asp238, and Asp240 each contribute to the Mg(2+) site. The residue at position 97 (Ser97) is a Phosphoserine.

Belongs to the phosphohexose mutase family. It depends on Mg(2+) as a cofactor. In terms of processing, activated by phosphorylation.

The enzyme catalyses alpha-D-glucosamine 1-phosphate = D-glucosamine 6-phosphate. Catalyzes the conversion of glucosamine-6-phosphate to glucosamine-1-phosphate. This Prochlorococcus marinus (strain MIT 9312) protein is Phosphoglucosamine mutase.